A 206-amino-acid polypeptide reads, in one-letter code: A-type ATP synthase subunit E (206 aa).

The protein belongs to the V-ATPase E subunit family. As to quaternary structure, has multiple subunits with at least A(3), B(3), C, D, E, F, H, I and proteolipid K(x).

It localises to the cell membrane. In terms of biological role, component of the A-type ATP synthase that produces ATP from ADP in the presence of a proton gradient across the membrane. This chain is A-type ATP synthase subunit E, found in Methanothermobacter thermautotrophicus (strain ATCC 29096 / DSM 1053 / JCM 10044 / NBRC 100330 / Delta H) (Methanobacterium thermoautotrophicum).